A 74-amino-acid polypeptide reads, in one-letter code: MKFQVIAAVLLIEFCLCVVVTARMELQDVEDVENGFQKRRSCIDTIPQSRCTAFQCKHSMKYRLSFCRKTCGTC.

Positions 1 to 22 (MKFQVIAAVLLIEFCLCVVVTA) are cleaved as a signal peptide. Residues 23-39 (RMELQDVEDVENGFQKR) constitute a propeptide that is removed on maturation. The ShKT domain occupies 42–74 (CIDTIPQSRCTAFQCKHSMKYRLSFCRKTCGTC). 3 cysteine pairs are disulfide-bonded: Cys42-Cys74, Cys51-Cys67, and Cys56-Cys71.

This sequence belongs to the sea anemone type 1 potassium channel toxin family. Type 1a subfamily.

Its subcellular location is the secreted. It localises to the nematocyst. In terms of biological role, inhibits voltage-gated potassium channels (Kv) with higher potency for Kv1.1/KCNA1 and Kv1.3/KCNA3. The chain is Kappa-stichotoxin-Sgt4a from Stichodactyla gigantea (Giant carpet anemone).